Consider the following 239-residue polypeptide: Ribosomal RNA small subunit methyltransferase G (239 aa).

Residues G76, F81, D99–S101, I128–E129, and R147 each bind S-adenosyl-L-methionine.

It belongs to the methyltransferase superfamily. RNA methyltransferase RsmG family.

The protein localises to the cytoplasm. Specifically methylates the N7 position of a guanine in 16S rRNA. In Prochlorococcus marinus (strain MIT 9515), this protein is Ribosomal RNA small subunit methyltransferase G.